Reading from the N-terminus, the 453-residue chain is Trigger factor (453 aa).

The region spanning 171 to 256 (GDRVTVSFKG…ATKVEAPQDV (86 aa)) is the PPIase FKBP-type domain.

This sequence belongs to the FKBP-type PPIase family. Tig subfamily.

The protein resides in the cytoplasm. It carries out the reaction [protein]-peptidylproline (omega=180) = [protein]-peptidylproline (omega=0). Involved in protein export. Acts as a chaperone by maintaining the newly synthesized protein in an open conformation. Functions as a peptidyl-prolyl cis-trans isomerase. This chain is Trigger factor, found in Rhodopseudomonas palustris (strain BisB5).